A 980-amino-acid polypeptide reads, in one-letter code: Putative formate dehydrogenase YrhE (980 aa).

The 77-residue stretch at Lys5–Arg81 folds into the 2Fe-2S ferredoxin-type domain. [2Fe-2S] cluster contacts are provided by Cys39, Cys50, Cys53, and Cys65. Positions Arg81–Gly121 constitute a 4Fe-4S His(Cys)3-ligated-type domain. [4Fe-4S] cluster contacts are provided by His97, Cys101, Cys104, Cys111, Cys153, Cys156, Cys159, Cys163, Cys196, Cys199, Cys202, Cys206, Cys270, Cys273, Cys277, and Cys305. 4Fe-4S ferredoxin-type domains follow at residues Pro144–Thr171 and Glu187–Met216. The tract at residues Met258–Asp980 is formate dehydrogenase. The region spanning Thr263–Glu319 is the 4Fe-4S Mo/W bis-MGD-type domain. A disordered region spans residues Glu944–Asp980.

This sequence in the C-terminal section; belongs to the prokaryotic molybdopterin-containing oxidoreductase family. [2Fe-2S] cluster is required as a cofactor. It depends on [4Fe-4S] cluster as a cofactor. The cofactor is Mo-bis(molybdopterin guanine dinucleotide).

The catalysed reaction is formate + NAD(+) = CO2 + NADH. The chain is Putative formate dehydrogenase YrhE (yrhE) from Bacillus subtilis (strain 168).